Reading from the N-terminus, the 145-residue chain is Transcription antitermination protein NusB (145 aa).

This sequence belongs to the NusB family.

In terms of biological role, involved in transcription antitermination. Required for transcription of ribosomal RNA (rRNA) genes. Binds specifically to the boxA antiterminator sequence of the ribosomal RNA (rrn) operons. This Ruminiclostridium cellulolyticum (strain ATCC 35319 / DSM 5812 / JCM 6584 / H10) (Clostridium cellulolyticum) protein is Transcription antitermination protein NusB.